A 453-amino-acid polypeptide reads, in one-letter code: uncharacterized protein (453 aa).

One can recognise a TRAM domain in the interval 5-63 (LLKKNQSIELTIEDLTHDGSGVGKIDGYPLFIPNTLPGEKVTAKIIKLNKNYGFARMEN). Cys76, Cys82, Cys85, and Cys162 together coordinate [4Fe-4S] cluster. Residues Gln285, Tyr314, Glu335, and Asp383 each coordinate S-adenosyl-L-methionine. Residue Cys410 is the Nucleophile of the active site.

This sequence belongs to the class I-like SAM-binding methyltransferase superfamily. RNA M5U methyltransferase family.

This is an uncharacterized protein from Listeria monocytogenes serotype 4b (strain F2365).